The following is a 138-amino-acid chain: MVGGGTVKKDLKKAIQYYVKACELNEMFGCLSLVSNSQINKQKLFQYLSKACELNSGNGCRFLGDFYENGKYVKKDLRKAAQYYSKACGLNDQDGCLILGYKQYAGKGVVKNEKQAVKTFEKACRLGSEDACGILNNY.

TPR repeat units lie at residues Met1–Phe28, Gly57–Asp94, and Leu97–Asp130. 4 disulfides stabilise this stretch: Cys22-Cys30, Cys52-Cys60, Cys88-Cys96, and Cys124-Cys132.

It belongs to the hcp beta-lactamase family.

The catalysed reaction is a beta-lactam + H2O = a substituted beta-amino acid. Its function is as follows. Hydrolyzes 6-aminopenicillinic acid and 7-aminocephalosporanic acid (ACA) derivatives. The chain is Beta-lactamase HcpB (hcpB) from Helicobacter pylori (strain ATCC 700392 / 26695) (Campylobacter pylori).